Reading from the N-terminus, the 486-residue chain is Replication factor C large subunit (486 aa).

46–53 (GPPGSGKT) provides a ligand contact to ATP. The interval 419 to 486 (VKKETPKKTE…KKQATLDSFF (68 aa)) is disordered. 2 stretches are compositionally biased toward basic and acidic residues: residues 420–432 (KKETPKKTEKPKE) and 442–480 (RISEPPKEPLKEVIEETLEKSVEKADTKEEKKKDPKKQA).

Belongs to the activator 1 small subunits family. RfcL subfamily. In terms of assembly, heteromultimer composed of small subunits (RfcS) and large subunits (RfcL).

In terms of biological role, part of the RFC clamp loader complex which loads the PCNA sliding clamp onto DNA. The chain is Replication factor C large subunit from Methanococcus maripaludis (strain DSM 14266 / JCM 13030 / NBRC 101832 / S2 / LL).